Reading from the N-terminus, the 245-residue chain is Purine nucleoside phosphorylase (245 aa).

Histidine 8 provides a ligand contact to a purine D-ribonucleoside. Residues 24–28 (GDPGR), arginine 46, and 89–92 (RAGS) contribute to the phosphate site. An a purine D-ribonucleoside-binding site is contributed by 184 to 185 (ME). Aspartate 207 serves as the catalytic Proton donor.

It belongs to the PNP/MTAP phosphorylase family. As to quaternary structure, homohexamer; trimer of homodimers.

The enzyme catalyses inosine + phosphate = alpha-D-ribose 1-phosphate + hypoxanthine. It catalyses the reaction guanosine + phosphate = alpha-D-ribose 1-phosphate + guanine. It carries out the reaction 2'-deoxyguanosine + phosphate = 2-deoxy-alpha-D-ribose 1-phosphate + guanine. The catalysed reaction is 2'-deoxyinosine + phosphate = 2-deoxy-alpha-D-ribose 1-phosphate + hypoxanthine. It functions in the pathway purine metabolism; purine nucleoside salvage. In terms of biological role, as part of the purine salvage pathway, catalyzes the phosphorolytic breakdown of the N-glycosidic bond in the beta-(deoxy)ribonucleoside molecules, with the formation of the corresponding free purine bases and pentose-1-phosphate. Preferentially acts on inosine and guanosine, and to a lesser extent on 2'-deoxyinosine and 2'-deoxyguanosine. The chain is Purine nucleoside phosphorylase from Plasmodium vivax (strain Salvador I).